Consider the following 88-residue polypeptide: Small ribosomal subunit protein bS16 (88 aa).

This sequence belongs to the bacterial ribosomal protein bS16 family.

This is Small ribosomal subunit protein bS16 from Anaeromyxobacter sp. (strain K).